Here is a 421-residue protein sequence, read N- to C-terminus: UDP-N-acetylglucosamine 1-carboxyvinyltransferase (421 aa).

22–23 is a phosphoenolpyruvate binding site; the sequence is KN. Arg91 is a binding site for UDP-N-acetyl-alpha-D-glucosamine. Cys115 (proton donor) is an active-site residue. 2-(S-cysteinyl)pyruvic acid O-phosphothioketal is present on Cys115. UDP-N-acetyl-alpha-D-glucosamine contacts are provided by residues 120 to 124, 160 to 163, Asp305, and Ile327; these read RPVDL and KVSV.

Belongs to the EPSP synthase family. MurA subfamily.

It localises to the cytoplasm. The catalysed reaction is phosphoenolpyruvate + UDP-N-acetyl-alpha-D-glucosamine = UDP-N-acetyl-3-O-(1-carboxyvinyl)-alpha-D-glucosamine + phosphate. It participates in cell wall biogenesis; peptidoglycan biosynthesis. In terms of biological role, cell wall formation. Adds enolpyruvyl to UDP-N-acetylglucosamine. The sequence is that of UDP-N-acetylglucosamine 1-carboxyvinyltransferase from Photorhabdus laumondii subsp. laumondii (strain DSM 15139 / CIP 105565 / TT01) (Photorhabdus luminescens subsp. laumondii).